A 430-amino-acid polypeptide reads, in one-letter code: CinA-like protein (430 aa).

It belongs to the CinA family.

The protein is CinA-like protein of Prochlorococcus marinus (strain NATL1A).